The following is a 190-amino-acid chain: Adenine phosphoribosyltransferase (190 aa).

This sequence belongs to the purine/pyrimidine phosphoribosyltransferase family. Homodimer.

It is found in the cytoplasm. The enzyme catalyses AMP + diphosphate = 5-phospho-alpha-D-ribose 1-diphosphate + adenine. Its pathway is purine metabolism; AMP biosynthesis via salvage pathway; AMP from adenine: step 1/1. Catalyzes a salvage reaction resulting in the formation of AMP, that is energically less costly than de novo synthesis. The chain is Adenine phosphoribosyltransferase from Treponema denticola (strain ATCC 35405 / DSM 14222 / CIP 103919 / JCM 8153 / KCTC 15104).